The primary structure comprises 208 residues: MKGLFVTIEGPEGSGKTTLIQSLLPYFEQKEQKVMATREPGGIAISEDIRTILHKQEYTMMEARTEALLYAAARRQHLVEKVMPALNEDYLVLCDRFIDSSLAYQGYARGLGMDKVFEINRFATEDCMPSLTIYLDIEPEVGLARIAKDAGREVNRLDMEDISFHKRVREGYLQVVERFSDRIVLVNADQPMEKLIEEVIQVIEDKLL.

10-17 (GPEGSGKT) serves as a coordination point for ATP.

Belongs to the thymidylate kinase family.

It carries out the reaction dTMP + ATP = dTDP + ADP. Phosphorylation of dTMP to form dTDP in both de novo and salvage pathways of dTTP synthesis. The protein is Thymidylate kinase of Bacillus anthracis.